The following is a 327-amino-acid chain: Malate dehydrogenase (327 aa).

Residue 11 to 17 participates in NAD(+) binding; the sequence is GAAGQIS. 2 residues coordinate substrate: arginine 92 and arginine 98. NAD(+) contacts are provided by residues asparagine 105, glutamine 112, and 129–131; that span reads VGN. 2 residues coordinate substrate: asparagine 131 and arginine 162. Histidine 187 (proton acceptor) is an active-site residue.

Belongs to the LDH/MDH superfamily. MDH type 2 family.

It carries out the reaction (S)-malate + NAD(+) = oxaloacetate + NADH + H(+). Functionally, catalyzes the reversible oxidation of malate to oxaloacetate. The chain is Malate dehydrogenase from Nitrosomonas europaea (strain ATCC 19718 / CIP 103999 / KCTC 2705 / NBRC 14298).